The primary structure comprises 464 residues: Kynureninase (464 aa).

Methionine 1 is subject to N-acetylmethionine. Residues leucine 137, threonine 138, 165–168 (FPSD), serine 221, aspartate 250, histidine 253, and tyrosine 275 contribute to the pyridoxal 5'-phosphate site. An N6-(pyridoxal phosphate)lysine modification is found at lysine 276. Residues tryptophan 305 and asparagine 333 each contribute to the pyridoxal 5'-phosphate site.

The protein belongs to the kynureninase family. In terms of assembly, homodimer. The cofactor is pyridoxal 5'-phosphate.

The protein localises to the cytoplasm. It is found in the cytosol. The catalysed reaction is L-kynurenine + H2O = anthranilate + L-alanine + H(+). The enzyme catalyses 3-hydroxy-L-kynurenine + H2O = 3-hydroxyanthranilate + L-alanine + H(+). It functions in the pathway amino-acid degradation; L-kynurenine degradation; L-alanine and anthranilate from L-kynurenine: step 1/1. The protein operates within cofactor biosynthesis; NAD(+) biosynthesis; quinolinate from L-kynurenine: step 2/3. Its function is as follows. Catalyzes the cleavage of L-kynurenine (L-Kyn) and L-3-hydroxykynurenine (L-3OHKyn) into anthranilic acid (AA) and 3-hydroxyanthranilic acid (3-OHAA), respectively. Has a preference for the L-3-hydroxy form. Also has cysteine-conjugate-beta-lyase activity. In Mus musculus (Mouse), this protein is Kynureninase (Kynu).